The following is a 1075-amino-acid chain: Putative type I restriction enzyme MjaVIIP endonuclease subunit (1075 aa).

Belongs to the HsdR family. In terms of assembly, the type I restriction/modification system is composed of three polypeptides R, M and S.

The enzyme catalyses Endonucleolytic cleavage of DNA to give random double-stranded fragments with terminal 5'-phosphates, ATP is simultaneously hydrolyzed.. The restriction (R) subunit of a type I restriction enzyme that recognizes 5'-CAAN(7)TGG-3' and cleaves a random distance away. The R subunit is required for both endonuclease and ATPase activities but not for modification. After locating a non-methylated recognition site, the enzyme complex serves as a molecular motor that translocates DNA in an ATP-dependent manner until a collision occurs that triggers cleavage. This chain is Putative type I restriction enzyme MjaVIIP endonuclease subunit, found in Methanocaldococcus jannaschii (strain ATCC 43067 / DSM 2661 / JAL-1 / JCM 10045 / NBRC 100440) (Methanococcus jannaschii).